The sequence spans 449 residues: Plasmepsin IV (449 aa).

The Cytoplasmic portion of the chain corresponds to 1–37 (MALTVKEEEFSNTLIKNASAFDRLKLGNLKNLKIQKK). Residues 1-121 (MALTVKEEEF…SGYAQKGYLG (121 aa)) constitute a propeptide that is removed on maturation. The chain crosses the membrane as a helical; Signal-anchor for type II membrane protein span at residues 38–58 (LQFLYLILFVLITGVFFFFLI). The Lumenal segment spans residues 59–449 (GNFYSHRKLY…SVGFAVAKNL (391 aa)). Positions 137–444 (FYGEGQIGTN…DYEKESVGFA (308 aa)) constitute a Peptidase A1 domain. Aspartate 155 is a catalytic residue. Cysteine 168 and cysteine 173 are disulfide-bonded. Aspartate 335 is a catalytic residue. Cysteine 370 and cysteine 406 are oxidised to a cystine.

Belongs to the peptidase A1 family. Component of the hemozoin formation complex (HFC) composed of falcipains FP2A and/or FP2B, plasmepsins PMII, PMIII/HAP and PMIV, heme detoxifying protein HDP and falcilysin FLN. The HFC complex is involved in hemoglobin degradation and detoxification of heme in the food vacuole during the asexual blood stage. In terms of processing, proteolytically cleaved into the soluble active mature form by cysteine proteases in the digestive vacuole of trophozoites. Proteolysis requires an acidic environment. Autoprocessing or transprocessing by other plasmepsins such as PMII may serve as an alternate activation system.

It is found in the membrane. Its subcellular location is the vacuole lumen. It catalyses the reaction Hydrolysis of the bonds linking certain hydrophobic residues in hemoglobin or globin. Also cleaves small molecules substrates such as Ala-Leu-Glu-Arg-Thr-Phe-|-Phe(NO2)-Ser-Phe-Pro-Thr.. Its activity is regulated as follows. Inhibited by pepstatin A. During the asexual blood stage, catalyzes the cleavage of denatured host hemoglobin (Hb) or globins. Digestion of host Hb is an essential step which provides the parasite with amino acids for protein synthesis, and regulates osmolarity. This is Plasmepsin IV from Plasmodium falciparum (isolate HB3).